The chain runs to 162 residues: Necrosis-inducing secreted protein 1 (162 aa).

Residues 1–19 (MQFLTSLAAAASLVSLASA) form the signal peptide. N-linked (GlcNAc...) asparagine glycans are attached at residues asparagine 88, asparagine 126, asparagine 133, and asparagine 150. Residues 103–132 (EYVIAASLFSLYGASSSPTVSNYNVTVNVG) are BAK1/SERK3-binding.

This sequence belongs to the NIS1 effector family. As to quaternary structure, interacts with the host pattern recognition receptor (PRR)-associated kinases BAK1/SERK3, BKK1/SERK4 and BIK1.

The protein localises to the secreted. Its subcellular location is the host cytoplasm. Secreted effector that induces necrotic lesions in Nicotiana benthamiana. Interacts with the host receptor-like kinases (RLKs) BAK1/SERK3 and BKK1/SERK4, inhibits their kinase activity and suppresses INF1-induced pathogen-associated molecular pattern (PAMP)-triggered immunity (PTI) in N.benthamiana. Also interacts with the host receptor-like cytoplasmic kinase (RLCK) BIK1 and inhibits its kinase activity, thereby inhibiting PAMP-induced ROS generation. In PTI, phosphorylation relaying by RLKs and RLCKs is critical for the initiation of downstream signaling. This is Necrosis-inducing secreted protein 1 from Colletotrichum orbiculare (strain 104-T / ATCC 96160 / CBS 514.97 / LARS 414 / MAFF 240422) (Cucumber anthracnose fungus).